Consider the following 649-residue polypeptide: MSRMTLKSSMKKRVLSLLIAVVFLSLTGVFPSGLIETKVSAAKITENYQFDSRIRLNSIGFIPNHSKKATIAANCSTFYVVKEDGTIVYTGTATSMFDNDTKETVYIADFSSVNEEGTYYLAVPGVGKSVNFKIAMNVYEDAFKTAMLGMYLLRCGTSVSATYNGIHYSHGPCHTNDAYLDYINGQHTKKDSTKGWHDAGDYNKYVVNAGITVGSMFLAWEHFKDQLEPVALEIPEKNNSIPDFLDELKYEIDWILTMQYPDGSGRVAHKVSTRNFGGFIMPENEHDERFFVPWSSAATADFVAMTAMAARIFRPYDPQYAEKCINAAKVSYEFLKNNPANVFANQSGFSTGEYATVSDADDRLWAAAEMWETLGDEEYLRDFENRAAQFSKKIEADFDWDNVANLGMFTYLLSERPGKNPALVQSIKDSLLSTADSIVRTSQNHGYGRTLGTTYYWGCNGTVVRQTMILQVANKISPNNDYVNAALDAISHVFGRNYYNRSYVTGLGINPPMNPHDRRSGADGIWEPWPGYLVGGGWPGPKDWVDIQDSYQTNEIAINWNAALIYALAGFVNYNSAQNEVLYGDVNDDGKVNSTDLTLLKRYVLKAVSTLPSSKAEKNADVNRDGRVNSSDVTILSRYLIRVIEKLPI.

The first 41 residues, 1–41, serve as a signal peptide directing secretion; it reads MSRMTLKSSMKKRVLSLLIAVVFLSLTGVFPSGLIETKVSA. D201 functions as the Nucleophile in the catalytic mechanism. Catalysis depends on residues H516 and D546. The active-site Proton donor is E555. Residues 579-649 form the Dockerin domain; that stretch reads NEVLYGDVND…LIRVIEKLPI (71 aa).

It belongs to the glycosyl hydrolase 9 (cellulase E) family. Requires Ca(2+) as cofactor.

The enzyme catalyses Endohydrolysis of (1-&gt;4)-beta-D-glucosidic linkages in cellulose, lichenin and cereal beta-D-glucans.. In terms of biological role, this enzyme catalyzes the endohydrolysis of 1,4-beta-glucosidic linkages in cellulose, lichenin and cereal beta-D-glucans. The polypeptide is Endoglucanase D (celD) (Acetivibrio thermocellus (strain ATCC 27405 / DSM 1237 / JCM 9322 / NBRC 103400 / NCIMB 10682 / NRRL B-4536 / VPI 7372) (Clostridium thermocellum)).